We begin with the raw amino-acid sequence, 584 residues long: MTASITEIDSISEESNVESVSHLQHSPSFEKKGADFSISLNEKKDFASPITEEIPSPDGIATPEPETKKKLSFGARVWDLICSPGRQHDVCVAAPTQLVRSCDDYANSASTLVTNDDGTKTKVDSDEKKHKHKNVRDYIRFKHVDIGGRIFDLITRLAGTSFTFILMLIILIVWAIVGGIYRAPDNWQIVMQDGSSIQCYVSDTLLMRQQQNQHIQVLTMISQLRSRLLTTSRLLGPVLNDKTKISSVNVALMKDDVGDAEKLPTENWFDFICNYVSFMVGSIIFLVVYWIGIFIWIGFGRMLGWSDEWQLYINTAVAVELTFTSVFLQNVRHRHMKYIDRCVTSIFRIDSVIEEELRRMMGDKEPNEEITIKMDKINLGERSIDYYADLIGSGVGVVVSTCVFVAWIAIGNVMHWDSNWWLIIGTYTGLVGFLDGFVLRNVYFRESSKEATEIQTLIDEDYALYQKLDLPLPHEHITNYKSTFGGSLSQWIGWLCALPISVLFSVFVILGLIIAAGSLRFNETAQLFCNTPTMIIEGALLIVLIEAHNIANLKRRIQFRQIHLRRLTILKMLAGDNYSTTSTV.

Residues 1–28 (MTASITEIDSISEESNVESVSHLQHSPS) are disordered. Residues 1–160 (MTASITEIDS…FDLITRLAGT (160 aa)) are Extracellular-facing. A helical membrane pass occupies residues 161–181 (SFTFILMLIILIVWAIVGGIY). Residues 182–277 (RAPDNWQIVM…WFDFICNYVS (96 aa)) are Cytoplasmic-facing. Residues 278–298 (FMVGSIIFLVVYWIGIFIWIG) form a helical membrane-spanning segment. Residues 299–310 (FGRMLGWSDEWQ) are Extracellular-facing. The helical transmembrane segment at 311–331 (LYINTAVAVELTFTSVFLQNV) threads the bilayer. Topologically, residues 332 to 389 (RHRHMKYIDRCVTSIFRIDSVIEEELRRMMGDKEPNEEITIKMDKINLGERSIDYYAD) are cytoplasmic. Residues 390 to 410 (LIGSGVGVVVSTCVFVAWIAI) form a helical membrane-spanning segment. At 411-418 (GNVMHWDS) the chain is on the extracellular side. The helical transmembrane segment at 419–439 (NWWLIIGTYTGLVGFLDGFVL) threads the bilayer. Over 440–493 (RNVYFRESSKEATEIQTLIDEDYALYQKLDLPLPHEHITNYKSTFGGSLSQWIG) the chain is Cytoplasmic. Residues 494 to 514 (WLCALPISVLFSVFVILGLII) form a helical membrane-spanning segment. The Extracellular portion of the chain corresponds to 515–526 (AAGSLRFNETAQ). An N-linked (GlcNAc...) asparagine glycan is attached at N522. Residues 527–547 (LFCNTPTMIIEGALLIVLIEA) form a helical membrane-spanning segment. Residues 548 to 584 (HNIANLKRRIQFRQIHLRRLTILKMLAGDNYSTTSTV) lie on the Cytoplasmic side of the membrane.

The protein belongs to the FET4 family.

It localises to the golgi apparatus membrane. The protein resides in the cell membrane. Required for Fe(2+) ion low affinity uptake. Has a role in zinc uptake under conditions of zinc limitation. The sequence is that of Low-affinity iron/zinc ion transport protein fet4 (fet4) from Schizosaccharomyces pombe (strain 972 / ATCC 24843) (Fission yeast).